Reading from the N-terminus, the 106-residue chain is Ribonuclease P protein component 4 (106 aa).

Residues Cys-63, Cys-66, Cys-89, and Cys-92 each contribute to the Zn(2+) site.

Belongs to the eukaryotic/archaeal RNase P protein component 4 family. In terms of assembly, consists of a catalytic RNA component and at least 4-5 protein subunits. It depends on Zn(2+) as a cofactor.

Its subcellular location is the cytoplasm. The catalysed reaction is Endonucleolytic cleavage of RNA, removing 5'-extranucleotides from tRNA precursor.. Part of ribonuclease P, a protein complex that generates mature tRNA molecules by cleaving their 5'-ends. The protein is Ribonuclease P protein component 4 of Methanosphaerula palustris (strain ATCC BAA-1556 / DSM 19958 / E1-9c).